Here is a 165-residue protein sequence, read N- to C-terminus: NADH-quinone oxidoreductase subunit I (165 aa).

4Fe-4S ferredoxin-type domains lie at 57 to 86 and 96 to 125; these read RRYDNGEERCIACKLCEAVCPALAITIESE and SRYDIDLTKCIFCGFCEEACPVDAIVETHI. [4Fe-4S] cluster-binding residues include Cys-66, Cys-69, Cys-72, Cys-76, Cys-105, Cys-108, Cys-111, and Cys-115.

It belongs to the complex I 23 kDa subunit family. NDH-1 is composed of 14 different subunits. Subunits NuoA, H, J, K, L, M, N constitute the membrane sector of the complex. Requires [4Fe-4S] cluster as cofactor.

The protein resides in the cell inner membrane. The enzyme catalyses a quinone + NADH + 5 H(+)(in) = a quinol + NAD(+) + 4 H(+)(out). Its function is as follows. NDH-1 shuttles electrons from NADH, via FMN and iron-sulfur (Fe-S) centers, to quinones in the respiratory chain. The immediate electron acceptor for the enzyme in this species is believed to be ubiquinone. Couples the redox reaction to proton translocation (for every two electrons transferred, four hydrogen ions are translocated across the cytoplasmic membrane), and thus conserves the redox energy in a proton gradient. This is NADH-quinone oxidoreductase subunit I from Polaromonas sp. (strain JS666 / ATCC BAA-500).